Consider the following 120-residue polypeptide: NAD(P)H-quinone oxidoreductase subunit 3, chloroplastic (120 aa).

Helical transmembrane passes span 9 to 29, 64 to 84, and 88 to 108; these read IFWAFLIISSLIPILAFLISG, MFALVFVVFDVETVFLYPWAM, and VLGVSVFIEALIFVLIPIIGS.

The protein belongs to the complex I subunit 3 family. As to quaternary structure, NDH is composed of at least 16 different subunits, 5 of which are encoded in the nucleus.

The protein localises to the plastid. It is found in the chloroplast thylakoid membrane. The catalysed reaction is a plastoquinone + NADH + (n+1) H(+)(in) = a plastoquinol + NAD(+) + n H(+)(out). It carries out the reaction a plastoquinone + NADPH + (n+1) H(+)(in) = a plastoquinol + NADP(+) + n H(+)(out). Functionally, NDH shuttles electrons from NAD(P)H:plastoquinone, via FMN and iron-sulfur (Fe-S) centers, to quinones in the photosynthetic chain and possibly in a chloroplast respiratory chain. The immediate electron acceptor for the enzyme in this species is believed to be plastoquinone. Couples the redox reaction to proton translocation, and thus conserves the redox energy in a proton gradient. This Drimys granadensis protein is NAD(P)H-quinone oxidoreductase subunit 3, chloroplastic.